The following is a 219-amino-acid chain: Ribose-5-phosphate isomerase A (219 aa).

Residues 28-31, 81-84, and 94-97 each bind substrate; these read TGST, DGAD, and KGGG. E103 serves as the catalytic Proton acceptor. K121 serves as a coordination point for substrate.

This sequence belongs to the ribose 5-phosphate isomerase family. Homodimer.

The catalysed reaction is aldehydo-D-ribose 5-phosphate = D-ribulose 5-phosphate. The protein operates within carbohydrate degradation; pentose phosphate pathway; D-ribose 5-phosphate from D-ribulose 5-phosphate (non-oxidative stage): step 1/1. Catalyzes the reversible conversion of ribose-5-phosphate to ribulose 5-phosphate. This chain is Ribose-5-phosphate isomerase A, found in Acidithiobacillus ferrooxidans (strain ATCC 23270 / DSM 14882 / CIP 104768 / NCIMB 8455) (Ferrobacillus ferrooxidans (strain ATCC 23270)).